A 428-amino-acid polypeptide reads, in one-letter code: Cytochrome bc complex cytochrome b subunit (428 aa).

2 stretches are compositionally biased toward low complexity: residues 1–15 and 21–52; these read MAEN…TAPA and APGA…AAAP. Residues 1 to 72 are disordered; the sequence is MAENTPKPAA…RPDPNPFKDS (72 aa). The segment covering 59-72 has biased composition (basic and acidic residues); that stretch reads PPVDRPDPNPFKDS. Residues 110–130 traverse the membrane as a helical segment; it reads YFGGLGLFFFVIQILTGLLLL. Residues His-161 and His-175 each coordinate heme b. 6 consecutive transmembrane segments (helical) span residues 162-182, 193-213, 260-280, 312-331, 369-389, and 401-421; these read AWSA…TFFM, WVSG…GYLL, LHVV…LTLV, GIGW…MFPW, ELLA…VPFI, and IFTI…YRVY. Residues His-261 and His-276 each contribute to the heme b site.

Belongs to the cytochrome b family. Heme b serves as cofactor.

The protein resides in the cell inner membrane. Its function is as follows. Component of the green S-bacteria bc complex, which consists of the Rieske protein and cytochrome b subunit but appears to lack a cytochrome c1-equivalent. This complex has a comparatively low redox potential. The protein is Cytochrome bc complex cytochrome b subunit (petB) of Chlorobaculum thiosulfatiphilum (Chlorobium limicola f.sp. thiosulfatophilum).